The primary structure comprises 271 residues: Homeobox protein pal-1 (271 aa).

Disordered stretches follow at residues 1–25, 100–135, and 178–202; these read MSVD…TNVN, PPLS…ASSS, and GSAG…TNNV. Low complexity-rich tracts occupy residues 100–117 and 125–135; these read PPLS…YPSP and STSSGIGASSS. Residues 189-202 show a composition bias toward polar residues; sequence DTKSLPTGPGTNNV. Residues 207–266 constitute a DNA-binding region (homeobox); the sequence is ADKYRMVYSDYQRLELEKEFHTSAFITSDRKSQLSTMLSLTERQIKIWFQNRRAKDRRDK.

The protein belongs to the Caudal homeobox family. Interacts with tir-1 and let-756.

It localises to the nucleus. The protein resides in the chromosome. The protein localises to the centromere. It is found in the kinetochore. Functionally, transcriptional activator. Interacts with promoter regions for tbx-8.9, tbx-9, elt-1, hnd-1, scrt-1, and vab-7 genes. Binds the sequence ATTTATGAC. Binds to the enhancer region of the hlh-1 gene promoter during embryonic body wall muscle development. Activates the gene for mab-5 in embryo development. Necessary for vab-7 expression in C blastomeres in the posterior of embryos. Required for posterior V6 neuroectoblast cell fate specification during postembryonic neurogenesis (patterning) which generates the characteristic ray lineage during male tail development. Binds to ced-3 promoter and activated expression which is crucial for tail-spike cell death. Has a role in E cell specification in endoderm development and body wall muscle development. This is Homeobox protein pal-1 from Caenorhabditis briggsae.